Here is a 1158-residue protein sequence, read N- to C-terminus: ATP-dependent helicase/deoxyribonuclease subunit B (1158 aa).

An ATP-binding site is contributed by 8–15; that stretch reads GRAGTGKS. The [4Fe-4S] cluster site is built by Cys791, Cys1112, Cys1115, and Cys1121.

It belongs to the helicase family. AddB/RexB type 1 subfamily. As to quaternary structure, heterodimer of AddA and AddB. Mg(2+) serves as cofactor. Requires [4Fe-4S] cluster as cofactor.

Its function is as follows. The heterodimer acts as both an ATP-dependent DNA helicase and an ATP-dependent, dual-direction single-stranded exonuclease. Recognizes the chi site generating a DNA molecule suitable for the initiation of homologous recombination. The AddB subunit has 5' -&gt; 3' nuclease activity but not helicase activity. The chain is ATP-dependent helicase/deoxyribonuclease subunit B from Clostridium perfringens (strain 13 / Type A).